A 126-amino-acid chain; its full sequence is Glycine cleavage system H protein (126 aa).

A Lipoyl-binding domain is found at 22–104 (VVFIGITDYA…YGAGWIIKVK (83 aa)). K63 carries the N6-lipoyllysine modification.

Belongs to the GcvH family. In terms of assembly, the glycine cleavage system is composed of four proteins: P, T, L and H. (R)-lipoate serves as cofactor.

The glycine cleavage system catalyzes the degradation of glycine. The H protein shuttles the methylamine group of glycine from the P protein to the T protein. This is Glycine cleavage system H protein from Porphyromonas gingivalis (strain ATCC 33277 / DSM 20709 / CIP 103683 / JCM 12257 / NCTC 11834 / 2561).